We begin with the raw amino-acid sequence, 106 residues long: Protein RnfH (106 aa).

Belongs to the UPF0125 (RnfH) family.

The polypeptide is Protein RnfH (Ectopseudomonas mendocina (strain ymp) (Pseudomonas mendocina)).